The sequence spans 374 residues: ORC1-type DNA replication protein 6 (374 aa).

ATP-binding positions include 66-70 (TGKTT), Tyr209, and Arg221.

This sequence belongs to the CDC6/cdc18 family.

Functionally, involved in regulation of DNA replication. This chain is ORC1-type DNA replication protein 6 (orc6), found in Halobacterium salinarum (strain ATCC 700922 / JCM 11081 / NRC-1) (Halobacterium halobium).